A 203-amino-acid polypeptide reads, in one-letter code: Serine hydrolase-like protein (203 aa).

The 113-residue stretch at 33–145 (PPVLCLHGWL…FLLESDEMEN (113 aa)) folds into the AB hydrolase-1 domain. Serine 108 is an active-site residue.

This sequence belongs to the AB hydrolase superfamily.

Its function is as follows. Putative serine hydrolase. The sequence is that of Serine hydrolase-like protein (SERHL) from Homo sapiens (Human).